A 541-amino-acid polypeptide reads, in one-letter code: MDDCRFETSELQASVMISTPLFTDSWSSCNTANCNGSIKIHDIAGITYVAIPAVSMIQLGNLVGLPVTGDVLFPGLSSDEPLPMVDAAILKLFLQLKIKEGLELELLGKKLVVITGHSTGGALAAFTALWLLSQSSPPSFRVFCITFGSPLLGNQSLSTSISRSRLAHNFCHVVSIHDLVPRSSNEQFWPFGTYLFCSDKGGVCLDNAGSVRLMFNILNTTATQNTEEHQRYGHYVFTLSHMFLKSRSFLGGSIPDNSYQAGVALAVEALGFSNDDTSGVLVKECIETATRIVRAPILRSAELANELASVLPARLEIQWYKDRCDASEEQLGYYDFFKRYSLKRDFKVNMSRIRLAKFWDTVIKMVETNELPFDFHLGKKWIYASQFYQLLAEPLDIANFYKNRDIKTGGHYLEGNRPKRYEVIDKWQKGVKVPEECVRSRYASTTQDTCFWAKLEQAKEWLDEARKESSDPQRRSLLREKIVPFESYANTLVTKKEVSLDVKAKNSSYSVWEANLKEFKCKMGYENEIEMVVDESDAMET.

The Nucleophile role is filled by S118. Catalysis depends on charge relay system residues D178 and H229.

This sequence belongs to the AB hydrolase superfamily. Lipase family. As to quaternary structure, part of a nuclear complex made of EDS1, SG101 and PAD4 that can be redirected to the cytoplasm in the presence of an extranuclear form of EDS1. Sabilized by direct interaction with EDS1 in infected leaves. Part of a nuclear protein complex made of VICTR, PAD4 and EDS1. Interacts with VICTR. Interacts with EDS1.

The protein localises to the nucleus. It is found in the cytoplasm. Probable lipase required downstream of MPK4 for accumulation of the plant defense-potentiating molecule, salicylic acid, thus contributing to the plant innate immunity against invasive biotrophic pathogens and to defense mechanisms upon recognition of microbe-associated molecular patterns (MAMPs). Participates in the regulation of various molecular and physiological processes that influence fitness. Together with SG101, required for programmed cell death (PCD) triggered by NBS-LRR resistance proteins (e.g. RPS4, RPW8.1 and RPW8.2) in response to the fungal toxin fumonisin B1 (FB1) and avirulent pathogens (e.g. P.syringae pv. tomato strain DC3000 avrRps4 and pv. maculicola, turnip crinkle virus (TCV), and H.arabidopsidis isolates CALA2, EMOY2, EMWA1 and HIND4). Together with EDS1, confers a basal resistance by restricting the growth of virulent pathogens (e.g. H.arabidopsidis isolates NOCO2 and EMCO5, E.orontii isolate MGH, and P.syringae pv. tomato strain DC3000 or expressing HopW1-1 (HopPmaA)). Necessary for the salicylic acid-(SA-) dependent systemic acquired resistance (SAR) response that involves expression of multiple defense responses, including synthesis of the phytoalexin camalexin and expression of pathogenesis-related genes (e.g. PR1, ALD1, BGL2 and PR5) in response to pathogens, triggering a signal amplification loop that increases SA levels via EDS5 and SID2, but, together with EDS1, seems to repress the ethylene/jasmonic acid (ET/JA) defense pathway. May also function in response to abiotic stresses such as UV-C light and LSD1-dependent acclimatization to light conditions that promote excess excitation energy (EEE), probably by transducing redox signals and modulating stomatal conductance. Regulates the formation of lysigenous aerenchyma in hypocotyls in response to hypoxia, maybe via hydrogen peroxide production. Modulates leaf senescence in insect-infested tissue and triggers a phloem-based defense mechanism including antibiosis (e.g. green peach aphid (GPA), M.persicae) to limit phloem sap uptake and insect growth, thus providing an EDS1-independent basal resistance to insects. Also involved in regulation of root meristematic zone-targeted growth arrest together with EDS1 and in a VICTR-dependent manner. The protein is Lipase-like PAD4 (PAD4) of Arabidopsis thaliana (Mouse-ear cress).